The primary structure comprises 112 residues: Large ribosomal subunit protein P1 (112 aa).

Residues 71 to 90 (PAQAAAAAPAGGAPAAAAPA) show a composition bias toward low complexity. The segment at 71–112 (PAQAAAAAPAGGAPAAAAPAESKEGRRSQGESDDDMGFGLLD) is disordered. Residues 91–100 (ESKEGRRSQG) show a composition bias toward basic and acidic residues.

This sequence belongs to the eukaryotic ribosomal protein P1/P2 family. In terms of assembly, P1 and P2 exist as dimers at the large ribosomal subunit.

In terms of biological role, plays an important role in the elongation step of protein synthesis. This Oscheius tipulae protein is Large ribosomal subunit protein P1 (rpl-21).